Here is a 39-residue protein sequence, read N- to C-terminus: MLRTLVVFAPIIAALAWVIFNIQKPAREQFNRDFLGKKD.

The chain crosses the membrane as a helical span at residues 4-22; the sequence is TLVVFAPIIAALAWVIFNI.

The protein belongs to the PsbY family. In terms of assembly, PSII is composed of 1 copy each of membrane proteins PsbA, PsbB, PsbC, PsbD, PsbE, PsbF, PsbH, PsbI, PsbJ, PsbK, PsbL, PsbM, PsbT, PsbX, PsbY, Psb30/Ycf12, peripheral proteins PsbO, CyanoQ (PsbQ), PsbU, PsbV and a large number of cofactors. It forms dimeric complexes.

Its subcellular location is the cellular thylakoid membrane. Loosely associated component of the core of photosystem II (PSII), it is not always seen in crystals. PSII is a light-driven water plastoquinone oxidoreductase, using light energy to abstract electrons from H(2)O, generating a proton gradient subsequently used for ATP formation. The chain is Photosystem II reaction center protein Y from Prochlorococcus marinus (strain MIT 9515).